The chain runs to 922 residues: Protein translocase subunit SecA (922 aa).

ATP is bound by residues Gln-87, 105–109, and Asp-516; that span reads GEGKT. Residues 867-912 are disordered; sequence YTAPTETGEPETLPDPRTAGAGGDGLNLPEGVRIGRNDPCPCGSGK. Residues Cys-906, Cys-908, Cys-917, and His-918 each coordinate Zn(2+).

It belongs to the SecA family. In terms of assembly, monomer and homodimer. Part of the essential Sec protein translocation apparatus which comprises SecA, SecYEG and auxiliary proteins SecDF-YajC and YidC. It depends on Zn(2+) as a cofactor.

It is found in the cell inner membrane. Its subcellular location is the cytoplasm. The catalysed reaction is ATP + H2O + cellular proteinSide 1 = ADP + phosphate + cellular proteinSide 2.. Part of the Sec protein translocase complex. Interacts with the SecYEG preprotein conducting channel. Has a central role in coupling the hydrolysis of ATP to the transfer of proteins into and across the cell membrane, serving both as a receptor for the preprotein-SecB complex and as an ATP-driven molecular motor driving the stepwise translocation of polypeptide chains across the membrane. The chain is Protein translocase subunit SecA from Paracidovorax citrulli (strain AAC00-1) (Acidovorax citrulli).